The chain runs to 498 residues: MTSSKNPTNDNSYFDAVLVGAGIMSSTLALLISEVLPDIKFLILEKLNAPGSESTGAFNNAGTGHAANCELNYTPLDEKGNLIIDKALSINRSFETSMSLWASLYEAGKIDIKKFLKFIPHISFVSGQDNISFLKKRFQKMTENPEFIDMEFSTSFDEISSWAPLITKDRNPSTQIAATRIDRGTDINFEALTKEYLSLVSLNKNVEIRYKTELVDLKKIDKKQWELEISSEGRKTSIRSGYVFLGAGGKTINYLQKSKIPEAKSYGGFPVSGKWLICEKKDLTEKHNSKVYGKADIGSPPMSVPHLDTRWIDNKKLLLYGPFAGFTTKFLKQSSYFDLFSSIKKNNIFSMLDVGFKNNDLINYLISQSLKNHNSRVENLKNMMPSANPSDWYLKNAGQRVQIIKKTEGGGSLKFGTEIVNSSDGSLSALLGASPGASTAVSIMVEVLEKSVLFLNDKHNLQKKINDLIYPELSVSENYSTFIKEIKKRNNSIFGFHP.

The protein belongs to the MQO family. It depends on FAD as a cofactor.

The enzyme catalyses (S)-malate + a quinone = a quinol + oxaloacetate. It functions in the pathway carbohydrate metabolism; tricarboxylic acid cycle; oxaloacetate from (S)-malate (quinone route): step 1/1. This chain is Probable malate:quinone oxidoreductase, found in Prochlorococcus marinus (strain AS9601).